A 1045-amino-acid chain; its full sequence is Pre-mRNA-splicing factor ATP-dependent RNA helicase DHX16 (1045 aa).

The interval 101–211 (EDSEESSEEA…ERSDKKAYEE (111 aa)) is disordered. A phosphoserine mark is found at Ser103, Ser106, and Ser107. The segment covering 119–131 (QKKRKKRKHLRKK) has biased composition (basic residues). Residues 135–144 (EEEEEEEEEV) are compositionally biased toward acidic residues. Ser164 bears the Phosphoserine mark. Residues 170-211 (RTERERLQDLEERDAFAERVRQRDKDRTRNVLERSDKKAYEE) are compositionally biased toward basic and acidic residues. Residues 413–577 (LAAVANHQIL…FDDAPVFRIP (165 aa)) form the Helicase ATP-binding domain. 426 to 433 (GETGSGKT) provides a ligand contact to ATP. The DEAH box motif lies at 524–527 (DEAH). One can recognise a Helicase C-terminal domain in the interval 602 to 775 (SVLQIHVTQP…NVVLLLKSLG (174 aa)). Residue Thr716 is modified to Phosphothreonine. The tract at residues 1026-1045 (EDPHAKKMPKKTGKTREELG) is disordered.

Belongs to the DEAD box helicase family. DEAH subfamily. DDX16/PRP8 sub-subfamily. Component of pre-catalytic spliceosome complexes. Component of the minor spliceosome, which splices U12-type introns. Interacts with GPKOW. Interacts with TRIM6. Interacts with RIGI.

Its subcellular location is the nucleus. It is found in the nucleoplasm. It localises to the cytoplasm. It catalyses the reaction ATP + H2O = ADP + phosphate + H(+). In terms of biological role, required for pre-mRNA splicing as a component of the spliceosome. Contributes to pre-mRNA splicing after spliceosome formation and prior to the first transesterification reaction. As a component of the minor spliceosome, involved in the splicing of U12-type introns in pre-mRNAs. Also plays a role in innate antiviral response by acting as a pattern recognition receptor sensing splicing signals in viral RNA. Mechanistically, TRIM6 promotes the interaction between unanchored 'Lys-48'-polyubiquitin chains and DHX16, leading to DHX16 interaction with RIGI and ssRNA to amplify RIGI-dependent innate antiviral immune responses. In Sus scrofa (Pig), this protein is Pre-mRNA-splicing factor ATP-dependent RNA helicase DHX16 (DHX16).